Reading from the N-terminus, the 114-residue chain is Small nuclear ribonucleoprotein SmD1a (114 aa).

Residues 2–74 (KLVRFLMKLN…IRYYILPDSL (73 aa)) form the Sm domain. The segment at 87–114 (VKPKKPVAGKAVGRGRGRGRGRGRGRGR) is disordered. Repeat copies occupy residues 99-100 (GR), 101-102 (GR), 103-104 (GR), 105-106 (GR), 107-108 (GR), 109-110 (GR), 111-112 (GR), and 113-114 (GR). Residues 99–114 (GRGRGRGRGRGRGRGR) form an 8 X 2 AA tandem repeats of G-R region.

It belongs to the snRNP core protein family.

The protein resides in the nucleus. The protein localises to the nucleus speckle. Its subcellular location is the nucleolus. Its function is as follows. Involved in splicing regulation. Facilitates post-transcriptional gene silencing (PTGS) by limiting the degradation of transgene aberrant RNAs by the RNA quality control (RQC) machinery, thus favoring their entry into cytoplasmic siRNA bodies where they can trigger PTGS. Does not participate in the production of small RNAs. The protein is Small nuclear ribonucleoprotein SmD1a of Arabidopsis thaliana (Mouse-ear cress).